The following is a 348-amino-acid chain: Transmembrane protease serine 12 (348 aa).

The signal sequence occupies residues 1-20; it reads MRLGLLSVALLFVGSSHLYS. The Extracellular segment spans residues 21–324; sequence DHYSPSGRHR…EHFFHASTQG (304 aa). Residues 24-46 are disordered; that stretch reads SPSGRHRLGPSPEPAASSQQAEA. The Peptidase S1 domain occupies 78–318; that stretch reads IIGGTEAQAG…YQKWLTEHFF (241 aa). A disulfide bridge links Cys107 with Cys123. Active-site charge relay system residues include His122 and Asp171. 3 disulfide bridges follow: Cys206-Cys274, Cys237-Cys253, and Cys264-Cys294. N-linked (GlcNAc...) asparagine glycosylation is found at Asn219 and Asn249. Ser268 functions as the Charge relay system in the catalytic mechanism. The chain crosses the membrane as a helical span at residues 325–345; the sequence is ILTINILRGQILIALCFVILL. The Cytoplasmic segment spans residues 346-348; that stretch reads ATT.

It belongs to the peptidase S1 family. In testis, expressed in spermatocytes and spermatids (at protein level).

It localises to the cell membrane. The protein localises to the cytoplasmic vesicle. It is found in the secretory vesicle. Its subcellular location is the acrosome. Functionally, required for male fertility. Plays a critical role in sperm capacitation and acrosome reactions during fertilization, and also plays a role in the regulation of proteins involved in spermatogenesis. Regulates protein pathways that promote chromosomal synapsis formation, double-strand break repair, formation of the inner mitochondrial membrane cristae and apoptosis in developing sperm. Required for normal sperm motility and binding to the zona pellucida, potentially via a role in ADAM3 protein maturation. The chain is Transmembrane protease serine 12 from Homo sapiens (Human).